The following is a 123-amino-acid chain: Protein Wnt-3a (123 aa).

S1 carries O-palmitoleoyl serine lipidation. A disulfide bond links C89 and C104. N90 carries an N-linked (GlcNAc...) asparagine glycan.

This sequence belongs to the Wnt family. Disulfide bonds have critical and distinct roles in secretion and activity. Loss of each conserved cysteine results in high molecular weight oxidized Wnt oligomers, which are formed through inter-Wnt disulfide bonding. In terms of processing, palmitoleoylation is required for efficient binding to frizzled receptors. Depalmitoleoylation leads to Wnt signaling pathway inhibition.

It localises to the secreted. The protein localises to the extracellular space. The protein resides in the extracellular matrix. Functionally, ligand for members of the frizzled family of seven transmembrane receptors. Functions in the canonical Wnt signaling pathway that results in activation of transcription factors of the TCF/LEF family. Required for normal embryonic mesoderm development and formation of caudal somites. Required for normal morphogenesis of the developing neural tube. This Pituophis melanoleucus (Pine snake) protein is Protein Wnt-3a (WNT-3A).